A 379-amino-acid chain; its full sequence is Probable leucine aminopeptidase ARB_01443 (379 aa).

Residues methionine 1 to alanine 18 form the signal peptide. 2 residues coordinate Zn(2+): histidine 182 and aspartate 201. 2 N-linked (GlcNAc...) asparagine glycosylation sites follow: asparagine 202 and asparagine 226. Zn(2+) is bound by residues glutamate 240 and aspartate 267. Cysteine 312 and cysteine 316 are oxidised to a cystine. Histidine 345 contacts Zn(2+).

The protein belongs to the peptidase M28 family. M28E subfamily. Monomer. Requires Zn(2+) as cofactor.

Its subcellular location is the secreted. Functionally, probable extracellular aminopeptidase which contributes to pathogenicity. The protein is Probable leucine aminopeptidase ARB_01443 of Arthroderma benhamiae (strain ATCC MYA-4681 / CBS 112371) (Trichophyton mentagrophytes).